Reading from the N-terminus, the 379-residue chain is Carbamoyl phosphate synthase small chain (379 aa).

The CPSase stretch occupies residues 1-184 (MVSLYLENGL…LDYKPFDEKN (184 aa)). The L-glutamine site is built by Ser44, Gly240, and Gly242. The Glutamine amidotransferase type-1 domain maps to 188 to 378 (TIAVLDFGAK…VKLLENFPTR (191 aa)). Catalysis depends on Cys268, which acts as the Nucleophile. Leu269, Gln272, Asn310, and Tyr313 together coordinate L-glutamine. Residues His351 and Glu353 contribute to the active site.

It belongs to the CarA family. As to quaternary structure, composed of two chains; the small (or glutamine) chain promotes the hydrolysis of glutamine to ammonia, which is used by the large (or ammonia) chain to synthesize carbamoyl phosphate. Tetramer of heterodimers (alpha,beta)4.

The enzyme catalyses hydrogencarbonate + L-glutamine + 2 ATP + H2O = carbamoyl phosphate + L-glutamate + 2 ADP + phosphate + 2 H(+). The catalysed reaction is L-glutamine + H2O = L-glutamate + NH4(+). It participates in amino-acid biosynthesis; L-arginine biosynthesis; carbamoyl phosphate from bicarbonate: step 1/1. Its pathway is pyrimidine metabolism; UMP biosynthesis via de novo pathway; (S)-dihydroorotate from bicarbonate: step 1/3. Its function is as follows. Small subunit of the glutamine-dependent carbamoyl phosphate synthetase (CPSase). CPSase catalyzes the formation of carbamoyl phosphate from the ammonia moiety of glutamine, carbonate, and phosphate donated by ATP, constituting the first step of 2 biosynthetic pathways, one leading to arginine and/or urea and the other to pyrimidine nucleotides. The small subunit (glutamine amidotransferase) binds and cleaves glutamine to supply the large subunit with the substrate ammonia. The chain is Carbamoyl phosphate synthase small chain from Helicobacter acinonychis (strain Sheeba).